A 104-amino-acid polypeptide reads, in one-letter code: Pyrimidine/purine nucleoside phosphorylase (104 aa).

Belongs to the nucleoside phosphorylase PpnP family.

It carries out the reaction a purine D-ribonucleoside + phosphate = a purine nucleobase + alpha-D-ribose 1-phosphate. The enzyme catalyses adenosine + phosphate = alpha-D-ribose 1-phosphate + adenine. The catalysed reaction is cytidine + phosphate = cytosine + alpha-D-ribose 1-phosphate. It catalyses the reaction guanosine + phosphate = alpha-D-ribose 1-phosphate + guanine. It carries out the reaction inosine + phosphate = alpha-D-ribose 1-phosphate + hypoxanthine. The enzyme catalyses thymidine + phosphate = 2-deoxy-alpha-D-ribose 1-phosphate + thymine. The catalysed reaction is uridine + phosphate = alpha-D-ribose 1-phosphate + uracil. It catalyses the reaction xanthosine + phosphate = alpha-D-ribose 1-phosphate + xanthine. Catalyzes the phosphorolysis of diverse nucleosides, yielding D-ribose 1-phosphate and the respective free bases. Can use uridine, adenosine, guanosine, cytidine, thymidine, inosine and xanthosine as substrates. Also catalyzes the reverse reactions. The polypeptide is Pyrimidine/purine nucleoside phosphorylase (Herminiimonas arsenicoxydans).